The chain runs to 810 residues: MTKWTLGYSYPIALTISLIPALTPAIVQAAPLTPPPATGILDGLCYDYVPKVEKLAPGKDANAQPVEVDADRLEAKQGGTAVYQGDVKVRQGVRKFDSDYAELDQKSRDVIAIGNIYYNDGQITVTSDKTLKSNLDTKNSELEEGKYQVHGSPVRGSADRVTMTNNNQNITLEGAQYTTCPPGQEVWTLKAGSIDIDQTEVFGEAWNASLWLYDYPVFYFPYINFPIKDERKTGLLYPGYTQSSKNGMDITQPFYWNIAPNYDATITSRFMDRRGLMEQVEFRYMPDPAHVGSLYFENLADDKQYDETPSLNEKLSDGHRYLLNARHTSLFADNAMRVSVDYTKVRDRDYNYFNDFSPKVGTQVENQLQQSLMAGYFQQNWNLNTEVRTYQILLASAQQPHELMPRINHNYYHQGNWYDLAWNTEVTRFGYNNTQASAQNLGDAYTGTRVYTAPTLTMPLIDEAGYYLDSQYKLMYTRYDQEVPDNMSSTFTKRFTPEGASGVTLDEGIITRTLPSFRLKGGMTFERNQDWFGGDANQTLEPEFQYLYVPYKDQDNIGVYDSTTMRQDYYSLFSDRRYAGLDRISDSNRVSLGVTTRVYDQAGDERIRLAVAQAFDFVAPRVKLYPSESLATNTRSPLSFEGDAKINEQWFAHAGAQYDMDQSEISSANSALEYRREKLISQLNYRFVRNANYDLSNTNQVADLNQVGMLLTTPLNDQWHLYGGYYHDLDQGVKVDRKVGLKYDSCCWSINFNLEWVNTPDNVTMRPTSERSLGIQFEMKGLGSVGTGSKGTSLDTEALPYIRPFNLRDQ.

An N-terminal signal peptide occupies residues 1–29 (MTKWTLGYSYPIALTISLIPALTPAIVQA).

It belongs to the LptD family. In terms of assembly, component of the lipopolysaccharide transport and assembly complex. Interacts with LptE and LptA.

It localises to the cell outer membrane. In terms of biological role, together with LptE, is involved in the assembly of lipopolysaccharide (LPS) at the surface of the outer membrane. This chain is LPS-assembly protein LptD, found in Aeromonas salmonicida (strain A449).